We begin with the raw amino-acid sequence, 659 residues long: Threonine--tRNA ligase (659 aa).

Residues 1-61 (MSAVPELRIT…ADGDVVEEIR (61 aa)) enclose the TGS domain. Positions 260–555 (DHRKLGVELD…LLEHYAGAFP (296 aa)) are catalytic. Positions 353, 404, and 532 each coordinate Zn(2+).

This sequence belongs to the class-II aminoacyl-tRNA synthetase family. In terms of assembly, homodimer. Zn(2+) serves as cofactor.

Its subcellular location is the cytoplasm. It catalyses the reaction tRNA(Thr) + L-threonine + ATP = L-threonyl-tRNA(Thr) + AMP + diphosphate + H(+). Catalyzes the attachment of threonine to tRNA(Thr) in a two-step reaction: L-threonine is first activated by ATP to form Thr-AMP and then transferred to the acceptor end of tRNA(Thr). Also edits incorrectly charged L-seryl-tRNA(Thr). The polypeptide is Threonine--tRNA ligase (Thermobifida fusca (strain YX)).